A 394-amino-acid polypeptide reads, in one-letter code: Anhydro-N-acetylmuramic acid kinase (394 aa).

11–18 (GTSADGID) provides a ligand contact to ATP.

It belongs to the anhydro-N-acetylmuramic acid kinase family.

It catalyses the reaction 1,6-anhydro-N-acetyl-beta-muramate + ATP + H2O = N-acetyl-D-muramate 6-phosphate + ADP + H(+). Its pathway is amino-sugar metabolism; 1,6-anhydro-N-acetylmuramate degradation. It participates in cell wall biogenesis; peptidoglycan recycling. Its function is as follows. Catalyzes the specific phosphorylation of 1,6-anhydro-N-acetylmuramic acid (anhMurNAc) with the simultaneous cleavage of the 1,6-anhydro ring, generating MurNAc-6-P. Is required for the utilization of anhMurNAc either imported from the medium or derived from its own cell wall murein, and thus plays a role in cell wall recycling. The chain is Anhydro-N-acetylmuramic acid kinase from Deinococcus geothermalis (strain DSM 11300 / CIP 105573 / AG-3a).